The chain runs to 130 residues: DNA-directed RNA polymerase subunit omega (130 aa).

Disordered stretches follow at residues 80 to 99 and 110 to 130; these read PEPD…DADD and EELL…EEDE. A compositionally biased stretch (basic and acidic residues) spans 110-124; sequence EELLKGLEGLAPREE.

This sequence belongs to the RNA polymerase subunit omega family. The RNAP catalytic core consists of 2 alpha, 1 beta, 1 beta' and 1 omega subunit. When a sigma factor is associated with the core the holoenzyme is formed, which can initiate transcription.

It catalyses the reaction RNA(n) + a ribonucleoside 5'-triphosphate = RNA(n+1) + diphosphate. Its function is as follows. Promotes RNA polymerase assembly. Latches the N- and C-terminal regions of the beta' subunit thereby facilitating its interaction with the beta and alpha subunits. The protein is DNA-directed RNA polymerase subunit omega of Nitrobacter hamburgensis (strain DSM 10229 / NCIMB 13809 / X14).